The chain runs to 87 residues: Putative defensin-like protein 84 (87 aa).

The signal sequence occupies residues 1–27 (MTTKMVSSHRLLTLMVFALLLIPMISG). Intrachain disulfides connect cysteine 32–cysteine 73, cysteine 36–cysteine 54, cysteine 42–cysteine 71, and cysteine 46–cysteine 72.

It belongs to the DEFL family.

It is found in the secreted. In Arabidopsis thaliana (Mouse-ear cress), this protein is Putative defensin-like protein 84.